A 210-amino-acid chain; its full sequence is Actin-related protein 3C (210 aa).

An N-terminal signal peptide occupies residues Met-1–Ala-21.

It belongs to the actin family. Expressed in kidney, stomach, spleen, bone marrow, uterus, testis, placenta, skeletal muscle, mammary gland, lung, fetal liver, and fetal kidney, but not detected in small intestine, brain, and thymus. Expressed in low-metastatic lung adenocarcinoma cells but not in high-metastatic ones.

In terms of biological role, may play a role in the suppression of metastatic potential in lung adenoma carcinoma cells. The sequence is that of Actin-related protein 3C (ACTR3C) from Homo sapiens (Human).